A 96-amino-acid polypeptide reads, in one-letter code: uncharacterized protein (96 aa).

Transmembrane regions (helical) follow at residues 27-47 and 52-72; these read LYTVNDFIIGAMFLVGSFFFF and MSAGIWLFAIGSLLLLIRPTI.

The protein resides in the cell membrane. This is an uncharacterized protein from Bacillus subtilis (strain 168).